Reading from the N-terminus, the 227-residue chain is Translation initiation factor 6 (227 aa).

It belongs to the eIF-6 family.

In terms of biological role, binds to the 50S ribosomal subunit and prevents its association with the 30S ribosomal subunit to form the 70S initiation complex. The sequence is that of Translation initiation factor 6 from Methanococcus maripaludis (strain C5 / ATCC BAA-1333).